A 352-amino-acid polypeptide reads, in one-letter code: tRNA(Ile)-lysidine synthase (352 aa).

58-63 (SGGADS) serves as a coordination point for ATP.

Belongs to the tRNA(Ile)-lysidine synthase family.

It localises to the cytoplasm. It catalyses the reaction cytidine(34) in tRNA(Ile2) + L-lysine + ATP = lysidine(34) in tRNA(Ile2) + AMP + diphosphate + H(+). Its function is as follows. Ligates lysine onto the cytidine present at position 34 of the AUA codon-specific tRNA(Ile) that contains the anticodon CAU, in an ATP-dependent manner. Cytidine is converted to lysidine, thus changing the amino acid specificity of the tRNA from methionine to isoleucine. This chain is tRNA(Ile)-lysidine synthase, found in Streptomyces coelicolor (strain ATCC BAA-471 / A3(2) / M145).